The following is a 410-amino-acid chain: D-amino acid dehydrogenase (410 aa).

9-14 provides a ligand contact to FAD; that stretch reads GGGIVG.

The protein belongs to the DadA oxidoreductase family. The cofactor is FAD.

Its subcellular location is the cell inner membrane. It carries out the reaction a D-alpha-amino acid + a quinone + H2O = a 2-oxocarboxylate + a quinol + NH4(+). Activity is markedly inhibited by benzoate, and moderately by SH reagents such as p-hydroxymercuribenzoate, iodoacetamide, and iodoacetate. Catalyzes the oxidative deamination of D-amino acids. Has broad substrate specificity; is mostly active on D-proline, and to a lesser extent, on several other D-amino acids such as D-alanine, D-phenylalanine and D-serine. Mediates electron transport from D-proline to coenzyme Q1 in vitro, and is involved in the electron transport chain from D-proline to the c-type cytochrome in vivo. The chain is D-amino acid dehydrogenase from Helicobacter pylori (Campylobacter pylori).